Consider the following 276-residue polypeptide: Dermonecrotic toxin LlSicTox-alphaIV2iii (276 aa).

H5 is a catalytic residue. Residues E25 and D27 each coordinate Mg(2+). Catalysis depends on H41, which acts as the Nucleophile. 2 disulfide bridges follow: C45–C51 and C47–C193. D85 contributes to the Mg(2+) binding site.

Belongs to the arthropod phospholipase D family. Class II subfamily. Requires Mg(2+) as cofactor. Expressed by the venom gland.

It localises to the secreted. It catalyses the reaction an N-(acyl)-sphingosylphosphocholine = an N-(acyl)-sphingosyl-1,3-cyclic phosphate + choline. The catalysed reaction is an N-(acyl)-sphingosylphosphoethanolamine = an N-(acyl)-sphingosyl-1,3-cyclic phosphate + ethanolamine. The enzyme catalyses a 1-acyl-sn-glycero-3-phosphocholine = a 1-acyl-sn-glycero-2,3-cyclic phosphate + choline. It carries out the reaction a 1-acyl-sn-glycero-3-phosphoethanolamine = a 1-acyl-sn-glycero-2,3-cyclic phosphate + ethanolamine. Functionally, dermonecrotic toxins cleave the phosphodiester linkage between the phosphate and headgroup of certain phospholipids (sphingolipid and lysolipid substrates), forming an alcohol (often choline) and a cyclic phosphate. This toxin acts on sphingomyelin (SM). It may also act on ceramide phosphoethanolamine (CPE), lysophosphatidylcholine (LPC) and lysophosphatidylethanolamine (LPE), but not on lysophosphatidylserine (LPS), and lysophosphatidylglycerol (LPG). It acts by transphosphatidylation, releasing exclusively cyclic phosphate products as second products. Induces dermonecrosis, hemolysis, increased vascular permeability, edema, inflammatory response, and platelet aggregation. This Loxosceles laeta (South American recluse spider) protein is Dermonecrotic toxin LlSicTox-alphaIV2iii.